We begin with the raw amino-acid sequence, 115 residues long: Cysteine-rich venom protein 5 (115 aa).

A signal peptide spans 1–22 (MSKVMIIMLVGMIFAIISTVSG). Cystine bridges form between Cys26-Cys41, Cys33-Cys44, and Cys40-Cys51. The tract at residues 54 to 115 (RIGPPINTQP…RKPTNRPRSH (62 aa)) is disordered. Composition is skewed to basic residues over residues 68–77 (QPTRRTRGPK) and 86–115 (NRTRRPKPTNRSRRPKPTHRRKPTNRPRSH).

Expressed by the venom gland.

It is found in the secreted. This is Cysteine-rich venom protein 5 from Pimpla hypochondriaca (Parasitoid wasp).